The following is a 336-amino-acid chain: Dihydroorotate dehydrogenase (quinone) (336 aa).

FMN contacts are provided by residues 62-66 (AGLDK) and T86. K66 contributes to the substrate binding site. Substrate is bound at residue 111–115 (NRMGF). 2 residues coordinate FMN: N139 and N172. N172 serves as a coordination point for substrate. Residue S175 is the Nucleophile of the active site. N177 contacts substrate. K217 and T245 together coordinate FMN. 246 to 247 (NT) contributes to the substrate binding site. Residues G268, G297, and 318-319 (YS) contribute to the FMN site.

This sequence belongs to the dihydroorotate dehydrogenase family. Type 2 subfamily. Monomer. It depends on FMN as a cofactor.

It is found in the cell membrane. The enzyme catalyses (S)-dihydroorotate + a quinone = orotate + a quinol. Its pathway is pyrimidine metabolism; UMP biosynthesis via de novo pathway; orotate from (S)-dihydroorotate (quinone route): step 1/1. Its function is as follows. Catalyzes the conversion of dihydroorotate to orotate with quinone as electron acceptor. In Baumannia cicadellinicola subsp. Homalodisca coagulata, this protein is Dihydroorotate dehydrogenase (quinone).